Here is a 280-residue protein sequence, read N- to C-terminus: Acetylglutamate kinase (280 aa).

Substrate contacts are provided by residues 64 to 65 (GG), R86, and N177.

This sequence belongs to the acetylglutamate kinase family. ArgB subfamily.

The protein resides in the cytoplasm. It carries out the reaction N-acetyl-L-glutamate + ATP = N-acetyl-L-glutamyl 5-phosphate + ADP. It participates in amino-acid biosynthesis; L-arginine biosynthesis; N(2)-acetyl-L-ornithine from L-glutamate: step 2/4. In terms of biological role, catalyzes the ATP-dependent phosphorylation of N-acetyl-L-glutamate. The sequence is that of Acetylglutamate kinase from Nautilia profundicola (strain ATCC BAA-1463 / DSM 18972 / AmH).